A 446-amino-acid chain; its full sequence is Probable ribosomal RNA small subunit methyltransferase B (446 aa).

Residues 260 to 266 (CAAPGGK), aspartate 284, aspartate 311, and aspartate 330 contribute to the S-adenosyl-L-methionine site. Cysteine 383 functions as the Nucleophile in the catalytic mechanism.

Belongs to the class I-like SAM-binding methyltransferase superfamily. RsmB/NOP family.

The protein localises to the cytoplasm. The catalysed reaction is cytidine(967) in 16S rRNA + S-adenosyl-L-methionine = 5-methylcytidine(967) in 16S rRNA + S-adenosyl-L-homocysteine + H(+). Its function is as follows. Specifically methylates the cytosine at position 967 (m5C967) of 16S rRNA. The protein is Probable ribosomal RNA small subunit methyltransferase B of Synechocystis sp. (strain ATCC 27184 / PCC 6803 / Kazusa).